The chain runs to 668 residues: Beta-galactosidase (668 aa).

The N-terminal stretch at 1-24 (MARPAAVRVLWALLLPLLLGSARG) is a signal peptide. The propeptide occupies 25-29 (LRNAS). 3 residues coordinate substrate: Y84, E130, and N188. E189 functions as the Proton donor in the catalytic mechanism. Residues C196 and C231 are joined by a disulfide bond. N-linked (GlcNAc...) asparagine glycosylation occurs at N248. Catalysis depends on E269, which acts as the Nucleophile. Residue Y334 coordinates substrate. N465, N499, N546, and N556 each carry an N-linked (GlcNAc...) asparagine glycan. The cysteines at positions 627 and 635 are disulfide-linked.

The protein belongs to the glycosyl hydrolase 35 family. Homodimer. May form higher multimers.

It localises to the lysosome. It carries out the reaction Hydrolysis of terminal non-reducing beta-D-galactose residues in beta-D-galactosides.. In terms of biological role, cleaves beta-linked terminal galactosyl residues from gangliosides, glycoproteins, and glycosaminoglycans. This chain is Beta-galactosidase (GLB1), found in Canis lupus familiaris (Dog).